The primary structure comprises 226 residues: MNVKKHKFPGVYTVIEDDGSERIATKNLVPGQKVYGERIVKWKGEEYRIWNPNRSKLAAAILNDLKNFPIKPGTTVLYLGIASGTTASHVSDIIGWEGKIFGIEFSPRVLRELVPLVEERRNIVPILGDATKPEEYRALVTKVDVIFEDVAQPTQAKILIDNAKAYLKSGGYGMISIKSRSIDVTKEPEEVFREVEKELSEYFEVVERISLEPYEKDHALIVVRKP.

S-adenosyl-L-methionine is bound by residues 85-86 (TT), 104-105 (EF), 129-130 (DA), and 149-152 (DVAQ).

This sequence belongs to the methyltransferase superfamily. Fibrillarin family. Interacts with nop5. Component of box C/D small ribonucleoprotein (sRNP) particles that contain rpl7ae, FlpA and nop5, plus a guide RNA.

Its function is as follows. Involved in pre-rRNA and tRNA processing. Utilizes the methyl donor S-adenosyl-L-methionine to catalyze the site-specific 2'-hydroxyl methylation of ribose moieties in rRNA and tRNA. Site specificity is provided by a guide RNA that base pairs with the substrate. Methylation occurs at a characteristic distance from the sequence involved in base pairing with the guide RNA. The sequence is that of Fibrillarin-like rRNA/tRNA 2'-O-methyltransferase from Thermococcus sibiricus (strain DSM 12597 / MM 739).